A 380-amino-acid chain; its full sequence is Cytochrome b (380 aa).

4 helical membrane passes run 28-48, 72-93, 109-129, and 174-194; these read IGSLLGLLLAMQIMTGIFLSL, WLVRASHANGASMFFMLMYAHI, WLVGGNDFLLSMATAFLGYVL, and FYSFHFLLPFVILVFVLVHLL. Heme b is bound by residues H78 and H92. 2 residues coordinate heme b: H178 and H192. Position 197 (H197) interacts with a ubiquinone. 4 helical membrane-spanning segments follow: residues 222-243, 285-305, 317-337, and 344-364; these read WKILWVFVLLCFLLYVLLCYIT, IGGVVALAMSVLYLYTFPLAL, IGQLLFWGYVSLFFLLTWLGA, and YISLALPLTVMFFVVPGLYMI.

This sequence belongs to the cytochrome b family. The main subunits of complex b-c1 are: cytochrome b, cytochrome c1 and the Rieske protein. Requires heme b as cofactor.

Its subcellular location is the mitochondrion inner membrane. Functionally, component of the ubiquinol-cytochrome c reductase complex (complex III or cytochrome b-c1 complex) that is part of the mitochondrial respiratory chain. The b-c1 complex mediates electron transfer from ubiquinol to cytochrome c. Contributes to the generation of a proton gradient across the mitochondrial membrane that is then used for ATP synthesis. This Cepaea nemoralis (Banded wood snail) protein is Cytochrome b (MT-CYB).